A 287-amino-acid polypeptide reads, in one-letter code: Isopentenyl-diphosphate Delta-isomerase I (287 aa).

Positions 105 to 257 constitute a Nudix hydrolase domain; sequence LLHRAFSVFL…GVKLSPWFRL (153 aa). Active-site residues include C142 and Y207.

The protein belongs to the IPP isomerase type 1 family.

It catalyses the reaction isopentenyl diphosphate = dimethylallyl diphosphate. It functions in the pathway isoprenoid biosynthesis; dimethylallyl diphosphate biosynthesis; dimethylallyl diphosphate from isopentenyl diphosphate: step 1/1. The protein operates within porphyrin-containing compound metabolism; chlorophyll biosynthesis. In terms of biological role, catalyzes the 1,3-allylic rearrangement of the homoallylic substrate isopentenyl (IPP) to its highly electrophilic allylic isomer, dimethylallyl diphosphate (DMAPP). This is Isopentenyl-diphosphate Delta-isomerase I (IPI1) from Clarkia breweri (Fairy fans).